A 1710-amino-acid polypeptide reads, in one-letter code: Neurexin-2 (1710 aa).

Positions 1–28 (MALGSRWQPPPQLPPLLLLLALAAGVRG) are cleaved as a signal peptide. One can recognise a Laminin G-like 1 domain in the interval 29-206 (LEFGGGPGQW…LRGAAADPLC (178 aa)). Residues 29–1634 (LEFGGGPGQW…EVIRESSSTT (1606 aa)) lie on the Extracellular side of the membrane. The N-linked (GlcNAc...) asparagine glycan is linked to asparagine 60. An EGF-like 1 domain is found at 202 to 242 (ADPLCAPARNPCANGGLCTVLAPGEVGCDCSHTGFGGKFCS). 3 disulfide bridges follow: cysteine 206/cysteine 219, cysteine 213/cysteine 229, and cysteine 231/cysteine 241. Laminin G-like domains lie at 289-486 (VATF…SFRC) and 493-686 (DPVT…APFC). Aspartate 335 serves as a coordination point for Ca(2+). Asparagine 338 carries an N-linked (GlcNAc...) asparagine glycan. The Ca(2+) site is built by leucine 352 and methionine 420. Disulfide bonds link cysteine 450-cysteine 486, cysteine 657-cysteine 686, cysteine 694-cysteine 705, cysteine 699-cysteine 714, and cysteine 716-cysteine 726. The 38-residue stretch at 690 to 727 (TLKQCASAPCRNGGICREGWNRFVCDCIGTGFLGRVCE) folds into the EGF-like 2 domain. Laminin G-like domains follow at residues 732–904 (VLSY…ITYC) and 918–1093 (DPVT…ERGC). The Ca(2+) site is built by aspartate 779 and leucine 796. An N-linked (GlcNAc...) asparagine glycan is attached at asparagine 841. Ca(2+) is bound at residue arginine 854. Intrachain disulfides connect cysteine 1065–cysteine 1093, cysteine 1100–cysteine 1111, cysteine 1105–cysteine 1120, and cysteine 1122–cysteine 1132. In terms of domain architecture, EGF-like 3 spans 1096–1133 (PSTTCTEESCANQGVCLQQWDGFTCDCTMTSYGGPVCN). A Laminin G-like 6 domain is found at 1137 to 1345 (TTYIFGKGGA…HLRLVGEGPS (209 aa)). Ca(2+) is bound by residues aspartate 1189, valine 1206, isoleucine 1288, and asparagine 1290. Residue serine 1400 is glycosylated (O-linked (Xyl...) (heparan sulfate) serine). Disordered stretches follow at residues 1458 to 1508 (ATQD…LPPT) and 1587 to 1621 (EPRR…RGPP). A helical membrane pass occupies residues 1635 to 1655 (GMVVGIVAAAALCILILLYAM). Residues 1656 to 1710 (YKYRNRDEGSYQVDQSRNYISNSAQSNGAVVKEKAPAAPKTPSKAKKNKDKEYYV) lie on the Cytoplasmic side of the membrane. The interval 1677-1710 (NSAQSNGAVVKEKAPAAPKTPSKAKKNKDKEYYV) is disordered.

The laminin G-like domain 1 binds to NXPH1. Interacts with PATJ. Interacts with CBLN1, CBLN2 and, less avidly, with CBLN4. Specific isoforms bind neuroligins NLGN1, NLGN2 and NLGN3. Specific isoforms bind to alpha-dystroglycan. Interacts (via Laminin G-like 1 domain) with IGSF21 (Ig-like 1 domain) in a trans-interaction manner. Interacts with CLSTN3. Post-translationally, O-glycosylated; contains heparan sulfate. Heparan sulfate attachment is required for synapse development by mediating interactions with neuroligins.

Its subcellular location is the presynaptic cell membrane. Neuronal cell surface protein that may be involved in cell recognition and cell adhesion. May mediate intracellular signaling. In Mus musculus (Mouse), this protein is Neurexin-2.